An 861-amino-acid chain; its full sequence is FO synthase (861 aa).

Radical SAM core domains follow at residues 69-319 (ITYS…LQAP) and 528-763 (VTYI…LLHP). Residues 70 to 401 (TYSKSVFIPL…PRLLPHVRAL (332 aa)) form a cofG-like region. The [4Fe-4S] cluster site is built by Cys-83, Cys-87, Cys-90, Cys-542, Cys-546, and Cys-549. The segment at 505–838 (DGPALDALTR…KPRTTLYGEV (334 aa)) is cofH-like.

In the N-terminal section; belongs to the radical SAM superfamily. CofG family. The protein in the C-terminal section; belongs to the radical SAM superfamily. CofH family. It depends on [4Fe-4S] cluster as a cofactor.

It catalyses the reaction 5-amino-6-(D-ribitylamino)uracil + L-tyrosine + S-adenosyl-L-methionine = 5-amino-5-(4-hydroxybenzyl)-6-(D-ribitylimino)-5,6-dihydrouracil + 2-iminoacetate + 5'-deoxyadenosine + L-methionine + H(+). The catalysed reaction is 5-amino-5-(4-hydroxybenzyl)-6-(D-ribitylimino)-5,6-dihydrouracil + S-adenosyl-L-methionine = 7,8-didemethyl-8-hydroxy-5-deazariboflavin + 5'-deoxyadenosine + L-methionine + NH4(+) + H(+). The protein operates within cofactor biosynthesis; coenzyme F0 biosynthesis. Its function is as follows. Catalyzes the radical-mediated synthesis of 7,8-didemethyl-8-hydroxy-5-deazariboflavin (FO) from 5-amino-6-(D-ribitylamino)uracil and L-tyrosine. The polypeptide is FO synthase (fbiC) (Streptomyces avermitilis (strain ATCC 31267 / DSM 46492 / JCM 5070 / NBRC 14893 / NCIMB 12804 / NRRL 8165 / MA-4680)).